The sequence spans 434 residues: Enolase (434 aa).

Position 165 (Gln165) interacts with (2R)-2-phosphoglycerate. Glu207 serves as the catalytic Proton donor. Mg(2+) is bound by residues Asp244, Glu291, and Asp318. (2R)-2-phosphoglycerate is bound by residues Lys343, Arg372, Ser373, and Lys394. Lys343 functions as the Proton acceptor in the catalytic mechanism.

This sequence belongs to the enolase family. Mg(2+) serves as cofactor.

The protein resides in the cytoplasm. It localises to the secreted. Its subcellular location is the cell surface. The enzyme catalyses (2R)-2-phosphoglycerate = phosphoenolpyruvate + H2O. Its pathway is carbohydrate degradation; glycolysis; pyruvate from D-glyceraldehyde 3-phosphate: step 4/5. Its function is as follows. Catalyzes the reversible conversion of 2-phosphoglycerate (2-PG) into phosphoenolpyruvate (PEP). It is essential for the degradation of carbohydrates via glycolysis. The polypeptide is Enolase (Macrococcus caseolyticus (strain JCSC5402) (Macrococcoides caseolyticum)).